The chain runs to 86 residues: Kappa-theraphotoxin-Cg1a 5 (86 aa).

Positions 1 to 21 are cleaved as a signal peptide; that stretch reads MKVSVLITLAVLGVMFVWTSA. A propeptide spanning residues 22 to 50 is cleaved from the precursor; it reads AELEERGSDQRDSPAWLKSMERIFQSEER. Disulfide bonds link cysteine 52/cysteine 66, cysteine 59/cysteine 71, and cysteine 65/cysteine 78. Residue phenylalanine 84 is modified to Phenylalanine amide.

It belongs to the neurotoxin 10 (Hwtx-1) family. 28 (Jztx-11) subfamily. As to expression, expressed by the venom gland.

It localises to the secreted. This toxin acts as a voltage-dependent gating-modifier. It inhibits the sodium conductance (IC(50)=124 nM) and slows the fast inactivation (EC(50)=1180 nM) of Nav1.5/SCN5A. It significantly shifts the activation to more depolarized voltages and decreases the deactivation of Nav1.5 currents upon extreme depolarization, but only slightly affects voltage-dependence of steady-state inactivation. In addition, this toxin causes an approximately five-fold decrease in the rate of recovery from inactivation and an approximately 1.9-fold reduction in the closed-state inactivation rate. This toxin integrates the functions of site 3 toxins (alpha-scorpion toxins) with site 4 toxins (beta-scorpion and spider toxins) by targeting multiple sites on Nav1.5. Also shows inhibition of voltage-gated potassium channels (5 uM completely inhibits Kv2.1/KCNB1, whereas 5 uM moderately inhibits Kv4.2/KCND2 Kv4.1/KCND1 channels). This is Kappa-theraphotoxin-Cg1a 5 from Chilobrachys guangxiensis (Chinese earth tiger tarantula).